Reading from the N-terminus, the 332-residue chain is Transaldolase (332 aa).

Catalysis depends on K135, which acts as the Schiff-base intermediate with substrate.

Belongs to the transaldolase family. Type 1 subfamily. Homodimer.

It localises to the cytoplasm. It catalyses the reaction D-sedoheptulose 7-phosphate + D-glyceraldehyde 3-phosphate = D-erythrose 4-phosphate + beta-D-fructose 6-phosphate. It functions in the pathway carbohydrate degradation; pentose phosphate pathway; D-glyceraldehyde 3-phosphate and beta-D-fructose 6-phosphate from D-ribose 5-phosphate and D-xylulose 5-phosphate (non-oxidative stage): step 2/3. In terms of biological role, transaldolase is important for the balance of metabolites in the pentose-phosphate pathway. This chain is Transaldolase, found in Prochlorococcus marinus (strain NATL2A).